We begin with the raw amino-acid sequence, 328 residues long: Olfactory receptor 13A1 (328 aa).

Over 1-43 (MKLWMESHLIVPETRPSPRMMSNQTLVTEFILQGFSEHPEYRV) the chain is Extracellular. Residue asparagine 23 is glycosylated (N-linked (GlcNAc...) asparagine). A helical membrane pass occupies residues 44 to 64 (FLFSCFLFLYSGALTGNVLIT). Residues 65-72 (LAITFNPG) are Cytoplasmic-facing. The helical transmembrane segment at 73 to 93 (LHAPMYFFLLNLATMDIICTS) threads the bilayer. Topologically, residues 94–117 (SIMPKALASLVSEESSISYGGCMA) are extracellular. Cysteine 115 and cysteine 207 are oxidised to a cystine. The helical transmembrane segment at 118–138 (QLYFLTWAASSELLLLTVMAY) threads the bilayer. Residues 139–157 (DRYAAICHPLHYSSMMSKV) lie on the Cytoplasmic side of the membrane. Residues 158–178 (FCSGLATAVWLLCAVNTAIHT) traverse the membrane as a helical segment. The Extracellular portion of the chain corresponds to 179–215 (GLMLRLDFCGPNVIIHFFCEVPPLLLLSCSSTYVNGV). Residues 216–235 (MIVLADAFYGIVNFLMTIAS) form a helical membrane-spanning segment. Residues 236–255 (YGFIVSSILKVKTAWGRQKA) lie on the Cytoplasmic side of the membrane. A helical membrane pass occupies residues 256–276 (FSTCSSHLTVVCMYYTAVFYA). At 277-289 (YISPVSGYSAGKS) the chain is on the extracellular side. Residues 290–310 (KLAGLLYTVLSPTLNPLIYTL) form a helical membrane-spanning segment. The Cytoplasmic segment spans residues 311-328 (RNKEVKAALRKLFPFFRN).

It belongs to the G-protein coupled receptor 1 family.

The protein localises to the cell membrane. Functionally, odorant receptor. The protein is Olfactory receptor 13A1 (OR13A1) of Homo sapiens (Human).